A 287-amino-acid polypeptide reads, in one-letter code: Rhomboid-like protein 18 (287 aa).

6 consecutive transmembrane segments (helical) span residues 10–30 (NAPVTKAFVIATALFTVFFGI), 53–73 (LIISAFAFSSTTQLLSGLYLL), 90–110 (VFIFFSGFVSLILETILLSLT), 117–137 (LLTSGPYALVFASFVPFFLDI), 145–165 (VLGVHFSDKSFIYLAGVQLLL), and 172–192 (IFTGICGIIAGSLYRLNIFGI). The UBA domain occupies 244-284 (EPSEEAIATLVSMGFDQNAARQALVHARNDVNAATNILLEA).

It belongs to the peptidase S54 family.

The protein resides in the membrane. In terms of biological role, probable rhomboid-type serine protease that catalyzes intramembrane proteolysis. The polypeptide is Rhomboid-like protein 18 (Arabidopsis thaliana (Mouse-ear cress)).